Reading from the N-terminus, the 276-residue chain is NH(3)-dependent NAD(+) synthetase (276 aa).

39–46 (GLSGGVDS) serves as a coordination point for ATP. A Mg(2+)-binding site is contributed by Asp-45. Arg-123 lines the deamido-NAD(+) pocket. Thr-143 is an ATP binding site. Position 148 (Glu-148) interacts with Mg(2+). The deamido-NAD(+) site is built by Lys-156 and Asp-163. Positions 172 and 194 each coordinate ATP. 254-255 (HK) contributes to the deamido-NAD(+) binding site.

This sequence belongs to the NAD synthetase family. In terms of assembly, homodimer.

It carries out the reaction deamido-NAD(+) + NH4(+) + ATP = AMP + diphosphate + NAD(+) + H(+). It participates in cofactor biosynthesis; NAD(+) biosynthesis; NAD(+) from deamido-NAD(+) (ammonia route): step 1/1. Functionally, catalyzes the ATP-dependent amidation of deamido-NAD to form NAD. Uses ammonia as a nitrogen source. This Hyperthermus butylicus (strain DSM 5456 / JCM 9403 / PLM1-5) protein is NH(3)-dependent NAD(+) synthetase.